The primary structure comprises 1130 residues: Serine/threonine-protein kinase LATS1 (1130 aa).

Basic and acidic residues predominate over residues 1–11; the sequence is MKRSEKPEGYR. The tract at residues 1–71 is disordered; sequence MKRSEKPEGY…PRQVRNPPKF (71 aa). The span at 19–30 shows a compositional bias: polar residues; sequence PASNYTVSSRQM. Positions 46–64 are enriched in basic and acidic residues; the sequence is DAAKAEHNMSKMSTEDPRQ. The UBA domain maps to 100–141; sequence EVNPQMLQDLQAAGFDEDMVIQALQKTNNRSIEAAIEFISKM. Residues 149–276 form a disordered region; that stretch reads EQMAAAAARP…SWEPNSQTKR (128 aa). Over residues 167–179 the composition is skewed to polar residues; it reads NVQQSVNRKQSWK. Pro residues predominate over residues 235–268; the sequence is NPPPPPQVRSVTPPPPPRGQTPPPRGTTPPPPSW. Phosphothreonine is present on threonine 246. Serine 278 is modified (phosphoserine). Disordered stretches follow at residues 294–321, 365–405, 432–484, and 515–631; these read GAWQEGYPPPPLNTSPMNPPNQGQRGIS, AGTV…NGSI, NWPQ…PSAT, and THPS…ESRI. Pro residues predominate over residues 300-312; the sequence is YPPPPLNTSPMNP. The PPxY motif 1 motif lies at 373–376; that stretch reads PPPY. Residues 381-405 are compositionally biased toward polar residues; it reads ANGQSPSALQTGGSAAPSSYTNGSI. Low complexity predominate over residues 434-447; it reads PQSSSAPAQSSPSS. The segment covering 454–482 has biased composition (polar residues); it reads WQPNIPVRSNSFNNPLGNRASHSANSQPS. Phosphoserine; by NUAK1 and NUAK2 is present on serine 464. Residues 526–655 are interaction with YAP1; sequence TVQPSPFPEG…HVENVLKSHQ (130 aa). Positions 556-559 match the PPxY motif 2 motif; it reads PPPY. Residues 579–609 show a composition bias toward basic and acidic residues; that stretch reads PSKEDQPSLPKEDESEKSYENVDSGDKEKKQ. Residue serine 613 is modified to Phosphoserine. Basic and acidic residues predominate over residues 621 to 630; that stretch reads KKDEERRESR. A Phosphoserine modification is found at serine 674. Residues 705-1010 form the Protein kinase domain; sequence FVKIKTLGIG…ADEIKAHPFF (306 aa). Residues 711-719 and lysine 734 each bind ATP; that span reads LGIGAFGEV. Catalysis depends on aspartate 828, which acts as the Proton acceptor. The residue at position 909 (serine 909) is a Phosphoserine; by STK3/MST2. An AGC-kinase C-terminal domain is found at 1011–1090; that stretch reads KTIDFSSDLR…RRFFDDNGYP (80 aa). The residue at position 1079 (threonine 1079) is a Phosphothreonine; by STK3/MST2. Positions 1104–1130 are disordered; that stretch reads SQGSEQQSDEDDQNTGSEIKNRDLVYV.

The protein belongs to the protein kinase superfamily. AGC Ser/Thr protein kinase family. Complexes with CDK1 in early mitosis. LATS1-associated CDK1 has no mitotic cyclin partner and no apparent kinase activity. Binds phosphorylated ZYX, locating this protein to the mitotic spindle and suggesting a role for actin regulatory proteins during mitosis. Binds to and colocalizes with LIMK1 at the actomyosin contractile ring during cytokinesis. Interacts (via PPxY motif 2) with YAP1 (via WW domains). Interacts with MOB1A and MOB1B. Interacts with LIMD1, WTIP and AJUBA. Interacts with ESR1, DCAF1 and DCAF13; probably recruits DCAF1 and DCAF13 to ESR1 to promote ESR1 ubiquitination and ubiquitin-mediated proteasomal degradation. Interacts with STK3/MST2; this interaction is inhibited in the presence of DLG5. Interacts with SCRIB in the presence of DLG5. Interacts with WWTR1/TAZ. Interacts with WWC1, WWC2 and WWC3 (via their WW domains). The cofactor is Mg(2+). Autophosphorylated and phosphorylated during M-phase of the cell cycle. Phosphorylated by STK3/MST2 at Ser-909 and Thr-1079, which results in its activation. Phosphorylated by MAP4Ks; in parallel to STK3/MST2 and resulting to its activation. Phosphorylation at Ser-464 by NUAK1 and NUAK2 leads to decreased protein level and is required to regulate cellular senescence and cellular ploidy. Expressed in all adult tissues examined except for lung and kidney.

It is found in the cytoplasm. The protein resides in the cytoskeleton. The protein localises to the microtubule organizing center. It localises to the centrosome. Its subcellular location is the spindle. It is found in the midbody. The protein resides in the spindle pole body. The enzyme catalyses L-seryl-[protein] + ATP = O-phospho-L-seryl-[protein] + ADP + H(+). The catalysed reaction is L-threonyl-[protein] + ATP = O-phospho-L-threonyl-[protein] + ADP + H(+). Negative regulator of YAP1 in the Hippo signaling pathway that plays a pivotal role in organ size control and tumor suppression by restricting proliferation and promoting apoptosis. The core of this pathway is composed of a kinase cascade wherein STK3/MST2 and STK4/MST1, in complex with its regulatory protein SAV1, phosphorylates and activates LATS1/2 in complex with its regulatory protein MOB1, which in turn phosphorylates and inactivates YAP1 oncoprotein and WWTR1/TAZ. Phosphorylation of YAP1 by LATS1 inhibits its translocation into the nucleus to regulate cellular genes important for cell proliferation, cell death, and cell migration. Acts as a tumor suppressor which plays a critical role in maintenance of ploidy through its actions in both mitotic progression and the G1 tetraploidy checkpoint. Negatively regulates G2/M transition by down-regulating CDK1 kinase activity. Involved in the control of p53 expression. Affects cytokinesis by regulating actin polymerization through negative modulation of LIMK1. May also play a role in endocrine function. Plays a role in mammary gland epithelial cell differentiation, both through the Hippo signaling pathway and the intracellular estrogen receptor signaling pathway by promoting the degradation of ESR1. Acts as an activator of the NLRP3 inflammasome by mediating phosphorylation of 'Ser-265' of NLRP3 following NLRP3 palmitoylation, promoting NLRP3 activation by NEK7. This chain is Serine/threonine-protein kinase LATS1, found in Homo sapiens (Human).